The chain runs to 354 residues: Photosystem II protein D1 3 (354 aa).

A run of 3 helical transmembrane segments spans residues 29–46 (YIGWFGVLMIPTLLTATT), 118–133 (HFLIGVFCYMGREWEL), and 142–156 (WIAVAYSAPVAAATA). His118 is a chlorophyll a binding site. Tyr126 contacts pheophytin a. [CaMn4O5] cluster is bound by residues Asp170 and Glu189. Residues 197–218 (FHQLGVAGVFGGALFSAMHGSL) form a helical membrane-spanning segment. His198 serves as a coordination point for chlorophyll a. Residues His215 and 264–265 (SF) contribute to the a quinone site. His215 is a Fe cation binding site. Residue His272 coordinates Fe cation. A helical transmembrane segment spans residues 274-288 (FLAAWPVIGIWFTAL). [CaMn4O5] cluster-binding residues include His332, Glu333, Asp342, and Ala344. A propeptide spanning residues 345 to 354 (AVEVAPAVRG) is cleaved from the precursor.

It belongs to the reaction center PufL/M/PsbA/D family. As to quaternary structure, PSII is composed of 1 copy each of membrane proteins PsbA, PsbB, PsbC, PsbD, PsbE, PsbF, PsbH, PsbI, PsbJ, PsbK, PsbL, PsbM, PsbT, PsbX, PsbY, PsbZ, Psb30/Ycf12, peripheral proteins PsbO, CyanoQ (PsbQ), PsbU, PsbV and a large number of cofactors. It forms dimeric complexes. The D1/D2 heterodimer binds P680, chlorophylls that are the primary electron donor of PSII, and subsequent electron acceptors. It shares a non-heme iron and each subunit binds pheophytin, quinone, additional chlorophylls, carotenoids and lipids. D1 provides most of the ligands for the Mn4-Ca-O5 cluster of the oxygen-evolving complex (OEC). There is also a Cl(-1) ion associated with D1 and D2, which is required for oxygen evolution. The PSII complex binds additional chlorophylls, carotenoids and specific lipids. is required as a cofactor. Post-translationally, tyr-161 forms a radical intermediate that is referred to as redox-active TyrZ, YZ or Y-Z. In terms of processing, C-terminally processed by CtpA; processing is essential to allow assembly of the oxygen-evolving complex and thus photosynthetic growth.

Its subcellular location is the cellular thylakoid membrane. It catalyses the reaction 2 a plastoquinone + 4 hnu + 2 H2O = 2 a plastoquinol + O2. Functionally, photosystem II (PSII) is a light-driven water:plastoquinone oxidoreductase that uses light energy to abstract electrons from H(2)O, generating O(2) and a proton gradient subsequently used for ATP formation. It consists of a core antenna complex that captures photons, and an electron transfer chain that converts photonic excitation into a charge separation. The D1/D2 (PsbA/PsbD) reaction center heterodimer binds P680, the primary electron donor of PSII as well as several subsequent electron acceptors. The sequence is that of Photosystem II protein D1 3 from Synechococcus sp. (strain JA-3-3Ab) (Cyanobacteria bacterium Yellowstone A-Prime).